The primary structure comprises 360 residues: DNA replication and repair protein RecF (360 aa).

33 to 40 (GENGSGKT) serves as a coordination point for ATP.

This sequence belongs to the RecF family.

The protein resides in the cytoplasm. Functionally, the RecF protein is involved in DNA metabolism; it is required for DNA replication and normal SOS inducibility. RecF binds preferentially to single-stranded, linear DNA. It also seems to bind ATP. The protein is DNA replication and repair protein RecF of Rickettsia rickettsii (strain Iowa).